The following is a 197-amino-acid chain: MSEFQKVVVIDAKGHLLGRLASVVAKQLLGGQKVVVVRCEELNISGHFFRNKLKYLAYLRKACRYNPSRGAFHFRAPSRIFQKAVRGMLPHKTARGQAALEHLQAVEGIPPPFDKQKRVVVPAALRVLRLKPGRKYCTVGRLSSEVGWKYNDIVAKLEERRKVKSAAFYQAKLAKQKKIASAKEASPVNQKLSQFGY.

Phosphoserine is present on serine 193.

This sequence belongs to the universal ribosomal protein uL13 family. As to quaternary structure, component of the large ribosomal subunit (LSU). Mature yeast ribosomes consist of a small (40S) and a large (60S) subunit. The 40S small subunit contains 1 molecule of ribosomal RNA (18S rRNA) and at least 33 different proteins. The large 60S subunit contains 3 rRNA molecules (25S, 5.8S and 5S rRNA) and at least 46 different proteins.

The protein resides in the cytoplasm. In terms of biological role, component of the ribosome, a large ribonucleoprotein complex responsible for the synthesis of proteins in the cell. The small ribosomal subunit (SSU) binds messenger RNAs (mRNAs) and translates the encoded message by selecting cognate aminoacyl-transfer RNA (tRNA) molecules. The large subunit (LSU) contains the ribosomal catalytic site termed the peptidyl transferase center (PTC), which catalyzes the formation of peptide bonds, thereby polymerizing the amino acids delivered by tRNAs into a polypeptide chain. The nascent polypeptides leave the ribosome through a tunnel in the LSU and interact with protein factors that function in enzymatic processing, targeting, and the membrane insertion of nascent chains at the exit of the ribosomal tunnel. This is Large ribosomal subunit protein uL13B (rpl1601) from Schizosaccharomyces pombe (strain 972 / ATCC 24843) (Fission yeast).